The chain runs to 431 residues: Trigger factor (431 aa).

The 86-residue stretch at 160–245 (EDRVTIDFSG…LKKVEVMVLP (86 aa)) folds into the PPIase FKBP-type domain.

It belongs to the FKBP-type PPIase family. Tig subfamily.

Its subcellular location is the cytoplasm. The enzyme catalyses [protein]-peptidylproline (omega=180) = [protein]-peptidylproline (omega=0). Functionally, involved in protein export. Acts as a chaperone by maintaining the newly synthesized protein in an open conformation. Functions as a peptidyl-prolyl cis-trans isomerase. The protein is Trigger factor of Actinobacillus succinogenes (strain ATCC 55618 / DSM 22257 / CCUG 43843 / 130Z).